Reading from the N-terminus, the 558-residue chain is MKDFIEWKDFTFQYDVQSEPTLKGINLSIPKGEKVLILGPSGSGKSTLGHCLNGIIPNTHKGQYSGIFTINHKNAFDLSIYDKSHLVSTVLQDPDGQFIGLTVAEDIAFALENDVVAQEEMTSIVEMWAKRLEIAPLLSKRPQDLSGGQKQRVSLAGVLVDDSPILLFDEPLANLDPQSGQDIMALVDRIHQEQDATTIIIEHRLEDVLYERVDRVVLFSDGQIIYNGEPDQLLKTNFLSEYGIREPLYISALKNLGYDFEKQNTMTSIDDFDFSELLIPKMRALDLDKHTDKLLSVQHLSVSYDLENNTLDDVSFDLYKGQRLAIVGKNGAGKSTLAKALCQFIPNNATLIYNNEDVSQDSIKERAERIGYVLQNPNQMISQAMVFDEVALGLRLRGFSDNDIESRVYDILKVCGLYQFRNWPISALSFGQKKRVTIASILILNPEVIILDEPTAGQDMKHYTEMMSFLDKLSCDGHSIVMITHDMQLMLEYTDRAIVIDNGLIAADDHPINILSNTELLKKTHLKKTSLFALADRLGISPQKLTQWYIDNQGGKNG.

ABC transporter domains follow at residues 5–246 (IEWK…GIRE) and 295–527 (LSVQ…THLK). Residues 39–46 (GPSGSGKS) and 328–335 (GKNGAGKS) each bind ATP.

The protein belongs to the ABC transporter superfamily.

It is found in the cell membrane. Probably part of an ABC transporter complex. Responsible for energy coupling to the transport system. The protein is Putative ABC transporter ATP-binding protein gbs1680 of Streptococcus agalactiae serotype III (strain NEM316).